An 87-amino-acid polypeptide reads, in one-letter code: Small ribosomal subunit protein uS17 (87 aa).

Belongs to the universal ribosomal protein uS17 family. Part of the 30S ribosomal subunit.

Its function is as follows. One of the primary rRNA binding proteins, it binds specifically to the 5'-end of 16S ribosomal RNA. The polypeptide is Small ribosomal subunit protein uS17 (Anoxybacillus flavithermus (strain DSM 21510 / WK1)).